Consider the following 253-residue polypeptide: Indole-3-glycerol phosphate synthase (253 aa).

Belongs to the TrpC family.

The enzyme catalyses 1-(2-carboxyphenylamino)-1-deoxy-D-ribulose 5-phosphate + H(+) = (1S,2R)-1-C-(indol-3-yl)glycerol 3-phosphate + CO2 + H2O. It functions in the pathway amino-acid biosynthesis; L-tryptophan biosynthesis; L-tryptophan from chorismate: step 4/5. The sequence is that of Indole-3-glycerol phosphate synthase from Bacillus thuringiensis subsp. konkukian (strain 97-27).